Here is a 700-residue protein sequence, read N- to C-terminus: Endoglucanase A (700 aa).

The first 33 residues, 1–33, serve as a signal peptide directing secretion; the sequence is MKTRQRKRLFVSAALAVSLTMTVPMPASVNAAA. Glu213 is an active-site residue. In terms of domain architecture, CBM3 spans 550-700; that stretch reads NSDLVVQYKD…DGQLVWGIEP (151 aa).

It belongs to the glycosyl hydrolase 44 (cellulase J) family. A short form (EG-A-S) arises from post-translational proteolysis of approximately 150 AA at the C-terminus of EG-A-L.

It carries out the reaction Endohydrolysis of (1-&gt;4)-beta-D-glucosidic linkages in cellulose, lichenin and cereal beta-D-glucans.. The sequence is that of Endoglucanase A (celA) from Paenibacillus lautus (Bacillus lautus).